The primary structure comprises 324 residues: Glyoxylate/hydroxypyruvate reductase B (324 aa).

Active-site residues include arginine 237 and glutamate 266. The active-site Proton donor is the histidine 285.

Belongs to the D-isomer specific 2-hydroxyacid dehydrogenase family. GhrB subfamily. In terms of assembly, homodimer.

Its subcellular location is the cytoplasm. It carries out the reaction glycolate + NADP(+) = glyoxylate + NADPH + H(+). The catalysed reaction is (R)-glycerate + NAD(+) = 3-hydroxypyruvate + NADH + H(+). The enzyme catalyses (R)-glycerate + NADP(+) = 3-hydroxypyruvate + NADPH + H(+). Catalyzes the NADPH-dependent reduction of glyoxylate and hydroxypyruvate into glycolate and glycerate, respectively. The sequence is that of Glyoxylate/hydroxypyruvate reductase B from Escherichia coli O9:H4 (strain HS).